Here is a 223-residue protein sequence, read N- to C-terminus: Phosphoribosylformylglycinamidine synthase subunit PurQ (223 aa).

Positions 2–223 (KFAVLKFPGS…MVNSWREQNV (222 aa)) constitute a Glutamine amidotransferase type-1 domain. The Nucleophile role is filled by Cys-85. Active-site residues include His-193 and Glu-195.

As to quaternary structure, part of the FGAM synthase complex composed of 1 PurL, 1 PurQ and 2 PurS subunits.

The protein localises to the cytoplasm. It catalyses the reaction N(2)-formyl-N(1)-(5-phospho-beta-D-ribosyl)glycinamide + L-glutamine + ATP + H2O = 2-formamido-N(1)-(5-O-phospho-beta-D-ribosyl)acetamidine + L-glutamate + ADP + phosphate + H(+). It carries out the reaction L-glutamine + H2O = L-glutamate + NH4(+). The protein operates within purine metabolism; IMP biosynthesis via de novo pathway; 5-amino-1-(5-phospho-D-ribosyl)imidazole from N(2)-formyl-N(1)-(5-phospho-D-ribosyl)glycinamide: step 1/2. Part of the phosphoribosylformylglycinamidine synthase complex involved in the purines biosynthetic pathway. Catalyzes the ATP-dependent conversion of formylglycinamide ribonucleotide (FGAR) and glutamine to yield formylglycinamidine ribonucleotide (FGAM) and glutamate. The FGAM synthase complex is composed of three subunits. PurQ produces an ammonia molecule by converting glutamine to glutamate. PurL transfers the ammonia molecule to FGAR to form FGAM in an ATP-dependent manner. PurS interacts with PurQ and PurL and is thought to assist in the transfer of the ammonia molecule from PurQ to PurL. The polypeptide is Phosphoribosylformylglycinamidine synthase subunit PurQ (Staphylococcus saprophyticus subsp. saprophyticus (strain ATCC 15305 / DSM 20229 / NCIMB 8711 / NCTC 7292 / S-41)).